The sequence spans 236 residues: tRNA (guanine-N(1)-)-methyltransferase (236 aa).

S-adenosyl-L-methionine-binding positions include Gly-110 and 129-134 (LGDFVL).

The protein belongs to the RNA methyltransferase TrmD family. In terms of assembly, homodimer.

The protein resides in the cytoplasm. The enzyme catalyses guanosine(37) in tRNA + S-adenosyl-L-methionine = N(1)-methylguanosine(37) in tRNA + S-adenosyl-L-homocysteine + H(+). Its function is as follows. Specifically methylates guanosine-37 in various tRNAs. This chain is tRNA (guanine-N(1)-)-methyltransferase, found in Clostridium perfringens (strain SM101 / Type A).